The chain runs to 56 residues: UPF0434 protein CbuK_1382 (56 aa).

It belongs to the UPF0434 family.

This chain is UPF0434 protein CbuK_1382, found in Coxiella burnetii (strain CbuK_Q154) (Coxiella burnetii (strain Q154)).